The sequence spans 711 residues: MFNVTTKTMQWGEETLTLETGKVARQADGTVIATLGETSVMANVTYAREQKPGQDFFPLTVHYQEKYYAAGKIPGGFFKREARPTEKETLTARLIDRPIRPLFVPGFKNEVLVMCTVLSHDLVNDPDIVAMIAASAALTISGVPFMGPIAGARVGYEDGEYILNPTVDDMQDLRLNPEQRLDLVVAGTKDAVMMVESEAYELTEEEMLGAVTFAHEQIQPVIDLIVSLAEETAKEPFDFTPPDYSDLYAAVKAAGEEKMRAAYAISDKQERVAAVGAAKEEIIASLTEEQQEDGNLGSALKKLESVVLRGDVVKNGRRIDGRALDQVRAIECQTGLLPRTHGSALFTRGETQGLVVTTLGTGDDEQFIDALHGNFKSNFLLHYNFPPYSVGEVGRVGSPGRREIGHGKLAWRALQAVLPAPTDFPYTIRVVSEITESNGSSSMASVCGGSLSMMDAGVPLKAPVAGVAMGLVLEEDGSYGILTDILGDEDHLGDMDFKVAGTEAGITSLQMDIKVAGITPEIMKNALAQAKAGRLHILGEMAKSLTEASEFSQHAPRIETMQVPTDKIREVIGSGGKVIREIVEVSGAKVDINDDGVIKIASANGEAIQKAYDMIHAIVAEPEEGAVYTGKVVKIVDFGAFVNFFGKRDGLVHVSQIENRRLNHPSDVLKEGQEVKVKLLGFDDRGKVRLSMKVVDQETGEEIVAEKKEAE.

Residues aspartate 490 and aspartate 496 each coordinate Mg(2+). Residues 556–615 form the KH domain; it reads PRIETMQVPTDKIREVIGSGGKVIREIVEVSGAKVDINDDGVIKIASANGEAIQKAYDMI. The 69-residue stretch at 625–693 folds into the S1 motif domain; it reads GAVYTGKVVK…DRGKVRLSMK (69 aa).

Belongs to the polyribonucleotide nucleotidyltransferase family. The cofactor is Mg(2+).

It localises to the cytoplasm. It catalyses the reaction RNA(n+1) + phosphate = RNA(n) + a ribonucleoside 5'-diphosphate. Functionally, involved in mRNA degradation. Catalyzes the phosphorolysis of single-stranded polyribonucleotides processively in the 3'- to 5'-direction. The protein is Polyribonucleotide nucleotidyltransferase of Ruegeria sp. (strain TM1040) (Silicibacter sp.).